The chain runs to 152 residues: MGLEKSLFLFSLLVLVLGWVQPSLGVESRETPAQKFERQHMDEEGPFPSSPTYCNEMMKSRGMTSGWCKSMNTFVHEPLATVQAICSQGQVTCKNGRNNCHKSSSTLRITDCRLKGSSKYPNCDYTTTNSQKHIIIACEGNPLVPVHFDDSV.

Positions 1–25 (MGLEKSLFLFSLLVLVLGWVQPSLG) are cleaved as a signal peptide. Residues K35 and R38 each contribute to the substrate site. H40 (proton acceptor) is an active-site residue. 4 cysteine pairs are disulfide-bonded: C54–C112, C68–C123, C86–C138, and C93–C100. Substrate contacts are provided by residues 69–73 (KSMNT), K94, and R113. The Proton donor role is filled by H147.

It belongs to the pancreatic ribonuclease family. Monomer.

It localises to the secreted. The catalysed reaction is an [RNA] containing cytidine + H2O = an [RNA]-3'-cytidine-3'-phosphate + a 5'-hydroxy-ribonucleotide-3'-[RNA].. It catalyses the reaction an [RNA] containing uridine + H2O = an [RNA]-3'-uridine-3'-phosphate + a 5'-hydroxy-ribonucleotide-3'-[RNA].. Its function is as follows. Endonuclease that catalyzes the cleavage of RNA on the 3' side of pyrimidine nucleotides. Acts on single-stranded and double-stranded RNA. This is Ribonuclease pancreatic gamma-type from Rattus norvegicus (Rat).